The primary structure comprises 152 residues: Transcriptional regulator MraZ (152 aa).

SpoVT-AbrB domains follow at residues 5-52 (ATMV…PLPE) and 81-124 (ASEC…DEQT).

This sequence belongs to the MraZ family. As to quaternary structure, forms oligomers.

It is found in the cytoplasm. Its subcellular location is the nucleoid. Functionally, negatively regulates its own expression and that of the subsequent genes in the proximal part of the division and cell wall (dcw) gene cluster. Acts by binding directly to DNA. May also regulate the expression of genes outside the dcw cluster. This Serratia proteamaculans (strain 568) protein is Transcriptional regulator MraZ.